We begin with the raw amino-acid sequence, 453 residues long: Phosphoglucosamine mutase (453 aa).

Residue serine 105 is the Phosphoserine intermediate of the active site. Mg(2+) is bound by residues serine 105, aspartate 244, aspartate 246, and aspartate 248. Phosphoserine is present on serine 105.

Belongs to the phosphohexose mutase family. The cofactor is Mg(2+). In terms of processing, activated by phosphorylation.

The catalysed reaction is alpha-D-glucosamine 1-phosphate = D-glucosamine 6-phosphate. Functionally, catalyzes the conversion of glucosamine-6-phosphate to glucosamine-1-phosphate. In Chromohalobacter salexigens (strain ATCC BAA-138 / DSM 3043 / CIP 106854 / NCIMB 13768 / 1H11), this protein is Phosphoglucosamine mutase.